The primary structure comprises 37 residues: Cytochrome b6-f complex subunit 5 (37 aa).

A helical membrane pass occupies residues 5–25 (LLSGIVLGLISITSAGLFVTA).

The protein belongs to the PetG family. The 4 large subunits of the cytochrome b6-f complex are cytochrome b6, subunit IV (17 kDa polypeptide, PetD), cytochrome f and the Rieske protein, while the 4 small subunits are PetG, PetL, PetM and PetN. The complex functions as a dimer.

Its subcellular location is the plastid. The protein localises to the chloroplast thylakoid membrane. Its function is as follows. Component of the cytochrome b6-f complex, which mediates electron transfer between photosystem II (PSII) and photosystem I (PSI), cyclic electron flow around PSI, and state transitions. PetG is required for either the stability or assembly of the cytochrome b6-f complex. This chain is Cytochrome b6-f complex subunit 5, found in Psilotum nudum (Whisk fern).